The sequence spans 340 residues: MTLVGNFSPLVLVGDSDRVEAETVGAYLDGWAGHDKVRLATANAIKAILSGAGRLVGRIARGYLPGDPGKLVGVNSDQDQQKSIDVGSHNLFVELLIAAGVASILSEEADLPVAGKADGLVAVAIDPLDGSGNVGLGAPLGTIFSIFPADVEEPFLQPGNRQIAAGYVSYGNSVDLGFSVGEGVIFATLDPVSGQFHITRRNVKLPERTSDLAFNASVQRHLSAGMQAYVNDAFLGKDGPRGRNFNMRWLGAAVGDMHRIMQRGGLFFYVNDSRPGYEKGRLRLVYEANPIAFLAREAGSKATDGSRPILDIVPQTYHERSALVFGVAEEVDILGEYFVK.

Residues Glu107, Asp126, Leu128, and Asp129 each coordinate Mg(2+). Asn215 is a binding site for substrate. Glu287 lines the Mg(2+) pocket.

It belongs to the FBPase class 1 family. In terms of assembly, homotetramer. It depends on Mg(2+) as a cofactor.

The protein localises to the cytoplasm. It catalyses the reaction beta-D-fructose 1,6-bisphosphate + H2O = beta-D-fructose 6-phosphate + phosphate. It participates in carbohydrate biosynthesis; gluconeogenesis. This is Fructose-1,6-bisphosphatase class 1 from Brucella ovis (strain ATCC 25840 / 63/290 / NCTC 10512).